A 277-amino-acid polypeptide reads, in one-letter code: GPALPP motifs-containing protein 1 (277 aa).

The tract at residues 1–240 (MARDLIGPAL…VWTDTPADRE (240 aa)) is disordered. Ala-2 is subject to N-acetylalanine. A GPALPP motif 1 motif is present at residues 7 to 12 (GPALPP). Position 28 is a phosphoserine (Ser-28). The GPALPP motif 2 signature appears at 32 to 37 (GPALPP). 2 stretches are compositionally biased toward acidic residues: residues 60-69 (GNQESEEDDT) and 81-90 (DDDDDDDDEG). The short motif at 93-98 (GPALPP) is the GPALPP motif 3 element. A Phosphoserine modification is found at Ser-106. The segment covering 108 to 117 (PRPMIGPALP) has biased composition (pro residues). Positions 113-118 (GPALPP) match the GPALPP motif 4 motif. Residues Ser-138 and Ser-143 each carry the phosphoserine modification. Thr-147 is modified (phosphothreonine). Ser-149 and Ser-150 each carry phosphoserine. Residues 172 to 196 (EFEKRAQRMKEKLTKGDDDSSKPIT) are compositionally biased toward basic and acidic residues.

The sequence is that of GPALPP motifs-containing protein 1 (GPALPP1) from Bos taurus (Bovine).